The chain runs to 193 residues: Ribosome maturation factor RimM (193 aa).

One can recognise a PRC barrel domain in the interval 97-172; that stretch reads DDEFYLTDLV…LILADPPALV (76 aa). Residues 168 to 193 are disordered; that stretch reads PPALVGDHEGPEEKGLDENEELGDRD. The span at 173 to 193 shows a compositional bias: basic and acidic residues; that stretch reads GDHEGPEEKGLDENEELGDRD.

It belongs to the RimM family. In terms of assembly, binds ribosomal protein uS19.

It localises to the cytoplasm. An accessory protein needed during the final step in the assembly of 30S ribosomal subunit, possibly for assembly of the head region. Essential for efficient processing of 16S rRNA. May be needed both before and after RbfA during the maturation of 16S rRNA. It has affinity for free ribosomal 30S subunits but not for 70S ribosomes. The protein is Ribosome maturation factor RimM of Caulobacter vibrioides (strain ATCC 19089 / CIP 103742 / CB 15) (Caulobacter crescentus).